The following is a 261-amino-acid chain: Methylmalonyl-CoA decarboxylase (261 aa).

Substrate contacts are provided by residues alanine 64–isoleucine 68, glycine 110, threonine 132, and lysine 253.

Belongs to the enoyl-CoA hydratase/isomerase family. In terms of assembly, dimer of homotrimers.

It carries out the reaction (R)-methylmalonyl-CoA + H(+) = propanoyl-CoA + CO2. Its function is as follows. Catalyzes the decarboxylation of (R)-methylmalonyl-CoA to propionyl-CoA. Could be part of a pathway that converts succinate to propanoate. The chain is Methylmalonyl-CoA decarboxylase (scpB) from Escherichia coli (strain K12).